Consider the following 432-residue polypeptide: Adenosylhomocysteinase (432 aa).

Substrate-binding residues include threonine 57, aspartate 131, and glutamate 156. 157 to 159 lines the NAD(+) pocket; it reads TTT. Serine 183 bears the Phosphoserine mark. Substrate contacts are provided by lysine 186 and aspartate 190. Residue lysine 186 is modified to N6-(2-hydroxyisobutyryl)lysine. Tyrosine 193 is subject to Phosphotyrosine. NAD(+)-binding positions include 222–227, glutamate 243, asparagine 248, 299–301, asparagine 346, histidine 353, lysine 426, 426–430, and tyrosine 430; these read GDVGKG, IGH, and KPDHY.

This sequence belongs to the adenosylhomocysteinase family. As to quaternary structure, homotetramer. Interaction with AHCYL1. It depends on NAD(+) as a cofactor.

The protein resides in the cytoplasm. The protein localises to the melanosome. Its subcellular location is the nucleus. It is found in the endoplasmic reticulum. The enzyme catalyses S-adenosyl-L-homocysteine + H2O = L-homocysteine + adenosine. It participates in amino-acid biosynthesis; L-homocysteine biosynthesis; L-homocysteine from S-adenosyl-L-homocysteine: step 1/1. Functionally, catalyzes the hydrolysis of S-adenosyl-L-homocysteine to form adenosine and homocysteine. Binds copper ions. In Rattus norvegicus (Rat), this protein is Adenosylhomocysteinase (Ahcy).